The sequence spans 311 residues: tRNA-cytidine(32) 2-sulfurtransferase (311 aa).

The PP-loop motif motif lies at serine 47–serine 52. The [4Fe-4S] cluster site is built by cysteine 122, cysteine 125, and cysteine 213.

It belongs to the TtcA family. Homodimer. Mg(2+) is required as a cofactor. The cofactor is [4Fe-4S] cluster.

It localises to the cytoplasm. It carries out the reaction cytidine(32) in tRNA + S-sulfanyl-L-cysteinyl-[cysteine desulfurase] + AH2 + ATP = 2-thiocytidine(32) in tRNA + L-cysteinyl-[cysteine desulfurase] + A + AMP + diphosphate + H(+). The protein operates within tRNA modification. Its function is as follows. Catalyzes the ATP-dependent 2-thiolation of cytidine in position 32 of tRNA, to form 2-thiocytidine (s(2)C32). The sulfur atoms are provided by the cysteine/cysteine desulfurase (IscS) system. The protein is tRNA-cytidine(32) 2-sulfurtransferase of Shigella dysenteriae serotype 1 (strain Sd197).